The sequence spans 214 residues: Probable transaldolase (214 aa).

Lys-83 (schiff-base intermediate with substrate) is an active-site residue.

The protein belongs to the transaldolase family. Type 3B subfamily.

The protein localises to the cytoplasm. It catalyses the reaction D-sedoheptulose 7-phosphate + D-glyceraldehyde 3-phosphate = D-erythrose 4-phosphate + beta-D-fructose 6-phosphate. The protein operates within carbohydrate degradation; pentose phosphate pathway; D-glyceraldehyde 3-phosphate and beta-D-fructose 6-phosphate from D-ribose 5-phosphate and D-xylulose 5-phosphate (non-oxidative stage): step 2/3. Its function is as follows. Transaldolase is important for the balance of metabolites in the pentose-phosphate pathway. This is Probable transaldolase from Desulfatibacillum aliphaticivorans.